Here is a 34-residue protein sequence, read N- to C-terminus: Photosystem II reaction center protein Psb30 (34 aa).

A helical transmembrane segment spans residues 6-26 (VIGQLVSTGLIGLLGPAVIIL).

It belongs to the Psb30/Ycf12 family. In terms of assembly, PSII is composed of 1 copy each of membrane proteins PsbA, PsbB, PsbC, PsbD, PsbE, PsbF, PsbH, PsbI, PsbJ, PsbK, PsbL, PsbM, PsbT, PsbX, PsbY, PsbZ, Psb30/Ycf12, peripheral proteins of the oxygen-evolving complex and a large number of cofactors. It forms dimeric complexes.

It localises to the plastid. The protein localises to the chloroplast thylakoid membrane. Functionally, a core subunit of photosystem II (PSII), probably helps stabilize the reaction center. The protein is Photosystem II reaction center protein Psb30 of Skeletonema costatum (Marine centric diatom).